The chain runs to 506 residues: Cytochrome P450 monooxygenase BOA3 (506 aa).

A helical membrane pass occupies residues 15–35 (IYLWIGFVLVVLLAYPTYFAI). A heme-binding site is contributed by cysteine 451.

This sequence belongs to the cytochrome P450 family. The cofactor is heme.

It localises to the membrane. The protein operates within polyketide biosynthesis. Cytochrome P450 monooxygenase; part of the gene cluster A that mediates the biosynthesis of botcinic acid and its botcinin derivatives, acetate-derived polyketides that contribute to virulence when combined with the sesquiterpene botrydial. Botcinic acid and its derivatives have been shown to induce chlorosis and necrosis during host plant infection, but also have antifungal activities. Two polyketide synthases, BOA6 and BOA9, are involved in the biosynthesis of botcinins. BOA6 mediates the formation of the per-methylated tetraketide core by condensation of four units of malonyl-CoA with one unit of acetyl-CoA, which would be methylated in activated methylene groups to yield a bicyclic acid intermediate that could then either be converted to botrylactone derivatives or lose the starter acetate unit through a retro-Claisen type C-C bond cleavage to yield botcinin derivatives. The second polyketide synthase, BOA9, is probably required for the biosynthesis of the tetraketide side chain of botcinins. The methyltransferase (MT) domain within BOA6 is probably responsible for the incorporation of four methyl groups. The trans-enoyl reductase BOA5 might take over the enoyl reductase function of BOA6 that misses an ER domain. The monooxygenases BOA2, BOA3 and BOA4 might be involved in further hydroxylations at C4, C5 and C8, whereas BOA7, close to BOA9, could potentially be involved in the hydroxylation at C4 in the side chain of botcinins. This is Cytochrome P450 monooxygenase BOA3 from Botryotinia fuckeliana (strain B05.10) (Noble rot fungus).